Consider the following 309-residue polypeptide: Calcium homeostasis modulator protein 5 (309 aa).

The Cytoplasmic portion of the chain corresponds to 1–15 (MDAFQGILKFFLNQK). The a 1,2-diacyl-sn-glycero-3-phosphate site is built by Lys-15, Arg-32, and Val-37. A helical membrane pass occupies residues 16–37 (TVIGYSFMALLTVGSERLFSVV). Residues 38-45 (AFKCPCST) lie on the Extracellular side of the membrane. 3 disulfide bridges follow: Cys-41–Cys-127, Cys-43–Cys-158, and Cys-142–Cys-149. The chain crosses the membrane as a helical span at residues 46–70 (ENMTYGLVFLFAPAWVLLILGFFLN). Residues 71–99 (NRSWRLFTGCCVNPRKIFPRGHSCRFFYV) lie on the Cytoplasmic side of the membrane. A helical transmembrane segment spans residues 100-129 (LGQITLSSLVAPVMWLSVALLNGTFYECAM). Gln-102 and Asn-121 together coordinate a 1,2-diacyl-sn-glycero-3-phosphate. At 130-174 (SGTRSSGLLELICKGKPKECWEELHKVSCGKTSMLPTVNEELKLS) the chain is on the extracellular side. The helical transmembrane segment at 175–200 (LQAQSQILGWCLICSASFFSLLTTCY) threads the bilayer. At 201–309 (ARCRSKVSYL…MVLVGTAHNM (109 aa)) the chain is on the cytoplasmic side. Arg-202 contacts a 1,2-diacyl-sn-glycero-3-phosphate.

It belongs to the CALHM family. As to quaternary structure, oligomerizes to form undecameric cone-shaped channels.

Its subcellular location is the membrane. Its function is as follows. May assemble to form large pore channels with gating and ion conductance likely regulated by membrane lipids. The chain is Calcium homeostasis modulator protein 5 from Homo sapiens (Human).